The chain runs to 245 residues: Venom nerve growth factor 1 (245 aa).

An N-terminal signal peptide occupies residues Met-1–Ala-18. Residues Ala-19–Arg-125 constitute a propeptide that is removed on maturation. Residues Gly-47–Asp-66 are compositionally biased toward basic and acidic residues. The tract at residues Gly-47 to Leu-69 is disordered. 3 disulfides stabilise this stretch: Cys-139/Cys-206, Cys-182/Cys-234, and Cys-194/Cys-236. 2 N-linked (GlcNAc...) asparagine glycosylation sites follow: Asn-148 and Asn-151.

It belongs to the NGF-beta family. Homodimer; non-covalently linked. As to expression, expressed by the venom gland.

The protein resides in the secreted. Nerve growth factor is important for the development and maintenance of the sympathetic and sensory nervous systems. It stimulates division and differentiation of sympathetic and embryonic sensory neurons as well as basal forebrain cholinergic neurons in the brain. Its relevance in the snake venom is not clear. However, it has been shown to inhibit metalloproteinase-dependent proteolysis of platelet glycoprotein Ib alpha, suggesting a metalloproteinase inhibition to prevent metalloprotease autodigestion and/or protection against prey proteases. Binds a lipid between the two protein chains in the homodimer. The lipid-bound form promotes histamine relase from mouse mast cells, contrary to the lipid-free form. The polypeptide is Venom nerve growth factor 1 (Tropidechis carinatus (Australian rough-scaled snake)).